Consider the following 252-residue polypeptide: Transmembrane ascorbate-dependent reductase CYB561 (252 aa).

At Met-1 the chain carries N-acetylmethionine. Over 1–17 (MEGPASPAPAPGALPYY) the chain is Cytoplasmic. Residues 18–38 (VAFSQLLGLTVVAMTGAWLGM) form a helical membrane-spanning segment. One can recognise a Cytochrome b561 domain in the interval 20–221 (FSQLLGLTVV…FATVVLYILT (202 aa)). Residues 39 to 52 (YRGGIAWESALQFN) are Vesicular-facing. Residues 53–73 (VHPLCMVIGLVFLQGDALLVY) traverse the membrane as a helical segment. Heme b is bound by residues His-54, Arg-74, and Lys-81. Over 74–86 (RVFRNEAKRTTKV) the chain is Cytoplasmic. Residues Lys-81 and Lys-85 each contribute to the L-ascorbate site. The helical transmembrane segment at 87–107 (LHGLLHVFAFVIALVGLVAVF) threads the bilayer. Heme b is bound by residues His-88, 117-120 (DLYS), and His-122. The Vesicular portion of the chain corresponds to 108–125 (EHHRKKGYADLYSLHSWC). The helical transmembrane segment at 126–146 (GILVFALFFAQWLVGFSFFLF) threads the bilayer. Topologically, residues 147–159 (PGASFSLRSRYRP) are cytoplasmic. Arg-154 lines the L-ascorbate pocket. A helical transmembrane segment spans residues 160-180 (QHVFFGAAIFLLSVATALLGL). Positions 161 and 182 each coordinate heme b. Residues 181–199 (KEALLFELGTKYSTFEPEG) are Vesicular-facing. A helical transmembrane segment spans residues 200–220 (VLANVLGLLLAAFATVVLYIL). Residues 221–252 (TRADWKRPLQAEEQALSMDFKTLTEGDSPSSQ) are Cytoplasmic-facing. Residue Lys-226 coordinates heme b. 2 positions are modified to phosphoserine: Ser-248 and Ser-250.

Heme b is required as a cofactor.

Its subcellular location is the cytoplasmic vesicle. It localises to the secretory vesicle. It is found in the chromaffin granule membrane. The enzyme catalyses monodehydro-L-ascorbate radical(out) + L-ascorbate(in) = monodehydro-L-ascorbate radical(in) + L-ascorbate(out). Its function is as follows. Transmembrane reductase that uses ascorbate as an electron donor in the cytoplasm and transfers electrons across membranes to reduce monodehydro-L-ascorbate radical in the lumen of secretory vesicles. It is therefore involved the regeneration and homeostasis within secretory vesicles of ascorbate which in turn provides reducing equivalents needed to support the activity of intravesicular enzymes. The polypeptide is Transmembrane ascorbate-dependent reductase CYB561 (CYB561) (Ovis aries (Sheep)).